The chain runs to 78 residues: Neurogranin (78 aa).

N-acetylmethionine is present on methionine 1. Cysteine 3 and cysteine 51 are disulfide-bonded. Residues 26-47 form the IQ domain; sequence ANAAAAKIQASFRGHMARKKIK. Serine 36 is subject to Phosphoserine; by PHK and PKC. Residues 39-78 are disordered; it reads GHMARKKIKSGECGRKGPGPGGPGGAGGARGGAGGGPSGD. Positions 48–78 constitute a Collagen-like domain; sequence SGECGRKGPGPGGPGGAGGARGGAGGGPSGD. Positions 54–78 are enriched in gly residues; the sequence is KGPGPGGPGGAGGARGGAGGGPSGD. Arginine 68 carries the post-translational modification Citrulline; partial. Position 68 is an omega-N-methylarginine (arginine 68).

It belongs to the neurogranin family. As to quaternary structure, interacts with apo-calmodulin; this interaction decreases the affinity of calmodulin for calcium ions. Post-translationally, disulfide bond formation is redox-sensitive. The cysteine residues are readily oxidized by several nitric acid (NO) donors and other oxidants to form intramolecular disulfide. Cys-51 can form a disulfide with any other of the cysteine residues with an order of reactivity Cys-9 &gt; Cys-4 &gt; Cys-3. Phosphorylated at Ser-36 by PHK and PKC, phosphorylation prevents interaction with Calmodulin and interrupts several learning- and memory-associated functions.

Its subcellular location is the cytoplasm. The protein localises to the synapse. It is found in the cell projection. The protein resides in the dendritic spine. Functionally, regulates the affinity of calmodulin for calcium. Involved in synaptic plasticity and spatial learning. This Mus musculus (Mouse) protein is Neurogranin (Nrgn).